Reading from the N-terminus, the 175-residue chain is Nucleoside-triphosphatase THEP1 (175 aa).

Residues 8-15 and 99-106 each bind ATP; these read GSPGVGKS and LVVIDEIG.

The protein belongs to the THEP1 NTPase family.

The enzyme catalyses a ribonucleoside 5'-triphosphate + H2O = a ribonucleoside 5'-diphosphate + phosphate + H(+). Its function is as follows. Has nucleotide phosphatase activity towards ATP, GTP, CTP, TTP and UTP. May hydrolyze nucleoside diphosphates with lower efficiency. The polypeptide is Nucleoside-triphosphatase THEP1 (Methanosarcina acetivorans (strain ATCC 35395 / DSM 2834 / JCM 12185 / C2A)).